A 99-amino-acid chain; its full sequence is Large ribosomal subunit protein bL27 (99 aa).

A propeptide spanning residues 1–10 is cleaved from the precursor; sequence MKLIFDIQLF.

It belongs to the bacterial ribosomal protein bL27 family. The N-terminus is cleaved by ribosomal processing cysteine protease Prp.

This chain is Large ribosomal subunit protein bL27, found in Caldicellulosiruptor bescii (strain ATCC BAA-1888 / DSM 6725 / KCTC 15123 / Z-1320) (Anaerocellum thermophilum).